We begin with the raw amino-acid sequence, 116 residues long: Large ribosomal subunit protein eL22B (116 aa).

It belongs to the eukaryotic ribosomal protein eL22 family.

The protein is Large ribosomal subunit protein eL22B (rpl22a) of Dictyostelium discoideum (Social amoeba).